The chain runs to 228 residues: Ribosomal RNA large subunit methyltransferase E (228 aa).

The S-adenosyl-L-methionine site is built by Gly76, Trp78, Asp99, Asp115, and Asp139. Lys179 serves as the catalytic Proton acceptor.

The protein belongs to the class I-like SAM-binding methyltransferase superfamily. RNA methyltransferase RlmE family.

Its subcellular location is the cytoplasm. It catalyses the reaction uridine(2552) in 23S rRNA + S-adenosyl-L-methionine = 2'-O-methyluridine(2552) in 23S rRNA + S-adenosyl-L-homocysteine + H(+). Functionally, specifically methylates the uridine in position 2552 of 23S rRNA at the 2'-O position of the ribose in the fully assembled 50S ribosomal subunit. This chain is Ribosomal RNA large subunit methyltransferase E, found in Nitrobacter hamburgensis (strain DSM 10229 / NCIMB 13809 / X14).